The sequence spans 390 residues: Multidrug resistance protein MdtL (390 aa).

12 helical membrane passes run Phe-4–Val-24, Ile-42–Ala-62, Pro-69–Thr-89, Leu-93–Phe-113, Leu-131–Met-151, Ser-158–Leu-178, Leu-199–Phe-221, Ala-245–Phe-265, Thr-269–Ser-289, Val-293–Met-313, Ala-316–Val-336, and Ala-353–Ile-375.

This sequence belongs to the major facilitator superfamily. DHA1 family. MdtL (TC 2.A.1.2.22) subfamily.

It localises to the cell inner membrane. This is Multidrug resistance protein MdtL from Citrobacter koseri (strain ATCC BAA-895 / CDC 4225-83 / SGSC4696).